Reading from the N-terminus, the 630-residue chain is Telomere repeat-binding protein 5 (630 aa).

Disordered regions lie at residues 1–38 (MVLQ…SENH), 56–78 (EGGN…CAVK), and 308–327 (YTAS…GSPR). A compositionally biased stretch (low complexity) spans 57-71 (GGNSSSSSNNTSGNN). Polar residues predominate over residues 309 to 325 (TASQSEETNKNEGQSGS). The Ubiquitin-like domain occupies 354-433 (VKLGIKSFRV…SDTLGFCLEP (80 aa)). Residues 463 to 489 (LPSPGKHAKPSNSVESDLDSKPSAPNR) form a disordered region. The HTH myb-type domain occupies 523 to 582 (AQRRIRRPFSVAEVEALVQAVERLGTGRWRDVKLRAFDNAKHRTYVDLKDKWKTLVHTAR). The segment at residues 551-578 (WRDVKLRAFDNAKHRTYVDLKDKWKTLV) is a DNA-binding region (H-T-H motif).

Homodimer. In terms of tissue distribution, expressed ubiquitously.

Its subcellular location is the nucleus. Binds specifically to the plant telomeric double-stranded DNA sequences. At least 6 repeats of telomeric sequences are required for binding. This chain is Telomere repeat-binding protein 5 (TRP5), found in Arabidopsis thaliana (Mouse-ear cress).